The following is a 256-amino-acid chain: Alcohol dehydrogenase (256 aa).

12–35 (FVAGLGGIGLDTSKELVKRDLKNL) lines the NAD(+) pocket. S140 is a binding site for substrate. Catalysis depends on Y153, which acts as the Proton acceptor.

This sequence belongs to the short-chain dehydrogenases/reductases (SDR) family. As to quaternary structure, homodimer.

The catalysed reaction is a primary alcohol + NAD(+) = an aldehyde + NADH + H(+). It catalyses the reaction a secondary alcohol + NAD(+) = a ketone + NADH + H(+). The sequence is that of Alcohol dehydrogenase (Adh) from Drosophila mauritiana (Fruit fly).